The primary structure comprises 423 residues: MKEIISRHKAGEQIGICSVCSAHPLVIESALRFDLNSGNKVLIEATSNQVNQFGGYTGMKPADFRDFVYGIAQEVGFPRERLILGGDHLGPNCWQNEPADTAMEKSVELIKAYVAAGFSKIHLDASMSCADDPTPLDPMVVAKRAALLCQAAETTATDEQKRHLTYVIGTEVPVPGGEASAINAVHVTREQDAARTLQTHQAAFRALGLDEALNRVIAIVVQPGVEFDHTQIIHYQPQAAQALSAWIKETPMVYEAHSTDYQTRQAYRALVRDHYAILKVGPALTFALREAIFALAQMENELISPEQRSRVLEVIDEVMLNEPGYWKKYYRPTWSQAMVDIHFSLSDRIRYYWPHPRIRQSVEKLIANLNNVTLPLGLISQFMPVQFERLSEGVLTPTPHNLIIDKIQDVLRAYRFGCTPDVA.

It belongs to the GatZ/KbaZ family. GatZ subfamily. Forms a complex with GatY.

The protein operates within carbohydrate metabolism; D-tagatose 6-phosphate degradation; D-glyceraldehyde 3-phosphate and glycerone phosphate from D-tagatose 6-phosphate: step 2/2. Component of the tagatose-1,6-bisphosphate aldolase GatYZ that is required for full activity and stability of the Y subunit. Could have a chaperone-like function for the proper and stable folding of GatY. When expressed alone, GatZ does not show any aldolase activity. Is involved in the catabolism of galactitol. The polypeptide is D-tagatose-1,6-bisphosphate aldolase subunit GatZ (Salmonella enteritidis PT4 (strain P125109)).